The primary structure comprises 446 residues: Trigger factor (446 aa).

The PPIase FKBP-type domain occupies 182 to 267 (GDKVVVDYQN…VKNIFMMKAI (86 aa)).

It belongs to the FKBP-type PPIase family. Tig subfamily.

It localises to the cytoplasm. It carries out the reaction [protein]-peptidylproline (omega=180) = [protein]-peptidylproline (omega=0). Functionally, involved in protein export. Acts as a chaperone by maintaining the newly synthesized protein in an open conformation. Functions as a peptidyl-prolyl cis-trans isomerase. This is Trigger factor from Ehrlichia ruminantium (strain Gardel).